A 205-amino-acid polypeptide reads, in one-letter code: Octanoyltransferase (205 aa).

The 176-residue stretch at 30 to 205 (ERTADEIWLL…QALRARLGYA (176 aa)) folds into the BPL/LPL catalytic domain. Substrate contacts are provided by residues 69–76 (RGGQVTYH), 136–138 (SLG), and 149–151 (GLA). The active-site Acyl-thioester intermediate is cysteine 167.

The protein belongs to the LipB family.

It is found in the cytoplasm. The catalysed reaction is octanoyl-[ACP] + L-lysyl-[protein] = N(6)-octanoyl-L-lysyl-[protein] + holo-[ACP] + H(+). It participates in protein modification; protein lipoylation via endogenous pathway; protein N(6)-(lipoyl)lysine from octanoyl-[acyl-carrier-protein]: step 1/2. Its function is as follows. Catalyzes the transfer of endogenously produced octanoic acid from octanoyl-acyl-carrier-protein onto the lipoyl domains of lipoate-dependent enzymes. Lipoyl-ACP can also act as a substrate although octanoyl-ACP is likely to be the physiological substrate. The sequence is that of Octanoyltransferase from Ectopseudomonas mendocina (strain ymp) (Pseudomonas mendocina).